Here is a 90-residue protein sequence, read N- to C-terminus: Toxin 3FTx-Psa1 (90 aa).

Residues 1-21 form the signal peptide; that stretch reads MKTLPLVLAVVAFVYLDLAHT. 4 disulfide bridges follow: Cys-24–Cys-43, Cys-36–Cys-61, Cys-65–Cys-76, and Cys-77–Cys-82.

It belongs to the three-finger toxin family. Ancestral subfamily. Expressed by the venom gland.

Its subcellular location is the secreted. This Psammophis mossambicus (Olive sand snake) protein is Toxin 3FTx-Psa1.